The following is a 162-amino-acid chain: Small ribosomal subunit protein uS9 (162 aa).

The protein belongs to the universal ribosomal protein uS9 family.

In Methylobacterium sp. (strain 4-46), this protein is Small ribosomal subunit protein uS9.